A 630-amino-acid polypeptide reads, in one-letter code: Differentially expressed in FDCP 6 (630 aa).

A Phosphotyrosine modification is found at Tyr210. Residues 216–312 (DVLKQGYLWK…WTAAIQTAIR (97 aa)) form the PH domain. N6-acetyllysine is present on Lys225. 3 disordered regions span residues 318–341 (KTSL…RRRA), 378–418 (LQEE…ELKK), and 552–630 (HPIE…APGN). 2 stretches are compositionally biased toward basic and acidic residues: residues 331-341 (EQREQRERRRA) and 378-392 (LQEE…HKEL). The segment covering 588–606 (WGSQGNRTLSVNSSEQKSL) has biased composition (polar residues). Ser590 is subject to Phosphoserine. Residues 620–630 (QEEKLDPAPGN) are compositionally biased toward basic and acidic residues.

As to quaternary structure, interacts with IRF4, activated RAC1 and F-actin. Both the phosphorylated and non-phosphorylated forms bind phosphatidylinositol 3,4,5-trisphosphate (PtdInsP3). Interacts with ZAP70. Interacts with RAB11A. Tyrosine-phosphorylated by tyrosine-protein kinase LCK in response to T-cell activation. As to expression, thymus.

It is found in the cytoplasm. Its subcellular location is the cell membrane. The protein resides in the nucleus. It localises to the cytoskeleton. The protein localises to the perinuclear region. It is found in the cell projection. Its subcellular location is the filopodium. Phosphatidylinositol 3,4,5-trisphosphate-dependent guanine nucleotide exchange factor (GEF) which plays a role in the activation of Rho GTPases RAC1, RhoA and CDC42. Can regulate cell morphology in cooperation with activated RAC1. Involved in immune homeostasis by ensuring proper trafficking and availability of T-cell regulator CTLA-4 at T-cell surface. Plays a role in Th2 (T helper cells) development and/or activation, perhaps by interfering with ZAP70 signaling. Required for optimal T-cell effector function, lymphocyte homeostasis and the prevention of systemic autoimmunity. The protein is Differentially expressed in FDCP 6 (Def6) of Mus musculus (Mouse).